The primary structure comprises 630 residues: ATP synthase subunit alpha (630 aa).

173–180 (GDRQTGKT) is a binding site for ATP. The tract at residues 592–630 (AGGASTAADEDGAGDDEEEAPAPKAKSKNAKSASKAKEK) is disordered. Residues 599–611 (ADEDGAGDDEEEA) show a composition bias toward acidic residues.

Belongs to the ATPase alpha/beta chains family. F-type ATPases have 2 components, CF(1) - the catalytic core - and CF(0) - the membrane proton channel. CF(1) has five subunits: alpha(3), beta(3), gamma(1), delta(1), epsilon(1). CF(0) has three main subunits: a(1), b(2) and c(9-12). The alpha and beta chains form an alternating ring which encloses part of the gamma chain. CF(1) is attached to CF(0) by a central stalk formed by the gamma and epsilon chains, while a peripheral stalk is formed by the delta and b chains.

The protein resides in the cell inner membrane. It carries out the reaction ATP + H2O + 4 H(+)(in) = ADP + phosphate + 5 H(+)(out). Produces ATP from ADP in the presence of a proton gradient across the membrane. The alpha chain is a regulatory subunit. The polypeptide is ATP synthase subunit alpha (Sorangium cellulosum (strain So ce56) (Polyangium cellulosum (strain So ce56))).